The sequence spans 287 residues: ATP synthase gamma chain (287 aa).

This sequence belongs to the ATPase gamma chain family. In terms of assembly, F-type ATPases have 2 components, CF(1) - the catalytic core - and CF(0) - the membrane proton channel. CF(1) has five subunits: alpha(3), beta(3), gamma(1), delta(1), epsilon(1). CF(0) has three main subunits: a, b and c.

The protein resides in the cell inner membrane. In terms of biological role, produces ATP from ADP in the presence of a proton gradient across the membrane. The gamma chain is believed to be important in regulating ATPase activity and the flow of protons through the CF(0) complex. This chain is ATP synthase gamma chain, found in Photorhabdus laumondii subsp. laumondii (strain DSM 15139 / CIP 105565 / TT01) (Photorhabdus luminescens subsp. laumondii).